A 244-amino-acid chain; its full sequence is Phosphoribosyl isomerase A (244 aa).

D10 (proton acceptor) is an active-site residue. D129 functions as the Proton donor in the catalytic mechanism.

The protein belongs to the HisA/HisF family.

The protein localises to the cytoplasm. The enzyme catalyses 1-(5-phospho-beta-D-ribosyl)-5-[(5-phospho-beta-D-ribosylamino)methylideneamino]imidazole-4-carboxamide = 5-[(5-phospho-1-deoxy-D-ribulos-1-ylimino)methylamino]-1-(5-phospho-beta-D-ribosyl)imidazole-4-carboxamide. The catalysed reaction is N-(5-phospho-beta-D-ribosyl)anthranilate = 1-(2-carboxyphenylamino)-1-deoxy-D-ribulose 5-phosphate. The protein operates within amino-acid biosynthesis; L-histidine biosynthesis; L-histidine from 5-phospho-alpha-D-ribose 1-diphosphate: step 4/9. Its pathway is amino-acid biosynthesis; L-tryptophan biosynthesis; L-tryptophan from chorismate: step 3/5. In terms of biological role, involved in both the histidine and tryptophan biosynthetic pathways. The chain is Phosphoribosyl isomerase A from Mycobacterium ulcerans (strain Agy99).